The primary structure comprises 2477 residues: Non-reducing polyketide synthase mapC (2477 aa).

An N-terminal acylcarrier protein transacylase domain (SAT) region spans residues 14–269; the sequence is LLFGPQCSEI…HQQTHREGIQ (256 aa). A Ketosynthase family 3 (KS3) domain is found at 403-820; the sequence is MPPIAITGMA…GSNAALIVRD (418 aa). Residues Cys-568, His-703, and His-742 each act as for beta-ketoacyl synthase activity in the active site. The tract at residues 930-1233 is malonyl-CoA:ACP transacylase (MAT) domain; that stretch reads LCFGGQNGVT…HRVNLDGSDG (304 aa). The active-site For acyl/malonyl transferase activity is the Ser-1017. The tract at residues 1302-1435 is N-terminal hotdog fold; the sequence is QERAGLLRKL…GSVSLCNERS (134 aa). The PKS/mFAS DH domain occupies 1302-1612; that stretch reads QERAGLLRKL…FMSVSIRSLT (311 aa). The segment at 1307-1611 is product template (PT) domain; the sequence is LLRKLSDGPE…RFMSVSIRSL (305 aa). The active-site Proton acceptor; for dehydratase activity is His-1336. The interval 1461–1612 is C-terminal hotdog fold; the sequence is ASNGLKGSTV…FMSVSIRSLT (152 aa). Asp-1518 functions as the Proton donor; for dehydratase activity in the catalytic mechanism. The region spanning 1651 to 1725 is the Carrier domain; it reads DSDLVAVQEM…GLTEHIFPGH (75 aa). At Ser-1685 the chain carries O-(pantetheine 4'-phosphoryl)serine. Residues 1882–2117 are methyltransferase (CMeT) domain; sequence PYALEHDLLQ…GFEWVGWTNN (236 aa). Catalysis depends on for thioesterase activity residues Ser-2267 and Asp-2421.

Its subcellular location is the cytoplasm. The protein resides in the cytosol. It carries out the reaction 3 malonyl-CoA + acetyl-CoA + S-adenosyl-L-methionine + H(+) = 5-methylorsellinate + S-adenosyl-L-homocysteine + 3 CO2 + 4 CoA. The protein operates within secondary metabolite biosynthesis; terpenoid biosynthesis. Its function is as follows. Non-reducing polyketide synthase; part of the gene cluster that mediates the biosynthesis of mycophenolic acid (MPA), the first isolated antibiotic natural product in the world obtained from a culture of Penicillium brevicompactum in 1893. MpaC catalyzes the synthesis of 5-methylorsellinic acid (5MOA) via the condensation of 1 acetyl-CoA starter unit with 3 malonyl-CoA units and one methylation step. The first step of the pathway is the synthesis of 5-methylorsellinic acid (5MOA) by the cytosolic polyketide synthase mpaC. 5MOA is then converted to the phthalide compound 5,7-dihydroxy-4,6-dimethylphthalide (DHMP) by the endoplasmic reticulum-bound cytochrome P450 monooxygenase mpaDE. MpaDE first catalyzes hydroxylation of 5-MOA to 4,6-dihydroxy-2-(hydroxymethyl)-3-methylbenzoic acid (DHMB). MpaDE then acts as a lactone synthase that catalyzes the ring closure to convert DHMB into DHMP. The next step is the prenylation of DHMP by the Golgi apparatus-associated prenyltransferase mpaA to yield farnesyl-DHMP (FDHMP). The ER-bound oxygenase mpaB then mediates the oxidative cleavage the C19-C20 double bond in FDHMP to yield FDHMP-3C via a mycophenolic aldehyde intermediate. The O-methyltransferase mpaG catalyzes the methylation of FDHMP-3C to yield MFDHMP-3C. After the cytosolic methylation of FDHMP-3C, MFDHMP-3C enters into peroxisomes probably via free diffusion due to its low molecular weight. Upon a peroxisomal CoA ligation reaction, catalyzed by a beta-oxidation component enzyme acyl-CoA ligase ACL891, MFDHMP-3C-CoA would then be restricted to peroxisomes for the following beta-oxidation pathway steps. The peroxisomal beta-oxidation machinery than converts MFDHMP-3C-CoA into MPA_CoA, via a beta-oxidation chain-shortening process. Finally mpaH acts as a peroxisomal acyl-CoA hydrolase with high substrate specificity toward MPA-CoA to release the final product MPA. The sequence is that of Non-reducing polyketide synthase mapC from Penicillium roqueforti (strain FM164).